Reading from the N-terminus, the 228-residue chain is Cytochrome c oxidase subunit 2 (228 aa).

At 1-26 (MSTWANLGLQDSASPLMEQLIFFHDH) the chain is on the mitochondrial intermembrane side. A helical membrane pass occupies residues 27–48 (ALLILVMITVLVGYLMFMLFFN). Residues 49-62 (NYVNRFLLHGQLIE) lie on the Mitochondrial matrix side of the membrane. Residues 63–82 (MIWTILPAIILLFIALPSLR) form a helical membrane-spanning segment. Topologically, residues 83–228 (LLYLLDEINE…FIKWISSNNS (146 aa)) are mitochondrial intermembrane. Histidine 161, cysteine 196, glutamate 198, cysteine 200, histidine 204, and methionine 207 together coordinate Cu cation. Glutamate 198 lines the Mg(2+) pocket.

It belongs to the cytochrome c oxidase subunit 2 family. As to quaternary structure, component of the cytochrome c oxidase (complex IV, CIV), a multisubunit enzyme composed of a catalytic core of 3 subunits and several supernumerary subunits. The complex exists as a monomer or a dimer and forms supercomplexes (SCs) in the inner mitochondrial membrane with ubiquinol-cytochrome c oxidoreductase (cytochrome b-c1 complex, complex III, CIII). Cu cation is required as a cofactor.

The protein resides in the mitochondrion inner membrane. The catalysed reaction is 4 Fe(II)-[cytochrome c] + O2 + 8 H(+)(in) = 4 Fe(III)-[cytochrome c] + 2 H2O + 4 H(+)(out). Component of the cytochrome c oxidase, the last enzyme in the mitochondrial electron transport chain which drives oxidative phosphorylation. The respiratory chain contains 3 multisubunit complexes succinate dehydrogenase (complex II, CII), ubiquinol-cytochrome c oxidoreductase (cytochrome b-c1 complex, complex III, CIII) and cytochrome c oxidase (complex IV, CIV), that cooperate to transfer electrons derived from NADH and succinate to molecular oxygen, creating an electrochemical gradient over the inner membrane that drives transmembrane transport and the ATP synthase. Cytochrome c oxidase is the component of the respiratory chain that catalyzes the reduction of oxygen to water. Electrons originating from reduced cytochrome c in the intermembrane space (IMS) are transferred via the dinuclear copper A center (CU(A)) of subunit 2 and heme A of subunit 1 to the active site in subunit 1, a binuclear center (BNC) formed by heme A3 and copper B (CU(B)). The BNC reduces molecular oxygen to 2 water molecules using 4 electrons from cytochrome c in the IMS and 4 protons from the mitochondrial matrix. The protein is Cytochrome c oxidase subunit 2 (mt:CoII) of Drosophila simulans (Fruit fly).